We begin with the raw amino-acid sequence, 297 residues long: MPEIGAHVSAAGGPQRAPERGGEIGCDCMQLFTRNQRSWKVKPIAPGEADAFRRARAEHGIGAVMSHASYLINLAATDPEKHAKSQTALEAELERCHQLGIELLNFHPGAHLEAGIEAGIETIAATLNAICRNHPDKTDVCLVLENVAGQGSTVGADFAELAAILERLETPERFGVCVDTAHAFAAGYELHTAAGWDAMWAAFDDHIGLNRLVALHLNDSRPPCGSRKDRHALIGRGEIGPEAFRRAVTDPRTASLPQMLETPAGPEGWAQEIDWLRGCAQGNQPDLPEIEDRNINL.

The tract at residues 1–21 (MPEIGAHVSAAGGPQRAPERG) is disordered. Zn(2+) is bound by residues His67, His107, Glu145, Asp179, His182, His216, Asp229, His231, and Glu261.

It belongs to the AP endonuclease 2 family. Zn(2+) is required as a cofactor.

It catalyses the reaction Endonucleolytic cleavage to 5'-phosphooligonucleotide end-products.. Endonuclease IV plays a role in DNA repair. It cleaves phosphodiester bonds at apurinic or apyrimidinic (AP) sites, generating a 3'-hydroxyl group and a 5'-terminal sugar phosphate. This is Probable endonuclease 4 from Halorhodospira halophila (strain DSM 244 / SL1) (Ectothiorhodospira halophila (strain DSM 244 / SL1)).